Reading from the N-terminus, the 254-residue chain is tRNA (guanine-N(1)-)-methyltransferase (254 aa).

S-adenosyl-L-methionine contacts are provided by residues Gly114 and Ile134–Leu139.

The protein belongs to the RNA methyltransferase TrmD family. In terms of assembly, homodimer.

Its subcellular location is the cytoplasm. The enzyme catalyses guanosine(37) in tRNA + S-adenosyl-L-methionine = N(1)-methylguanosine(37) in tRNA + S-adenosyl-L-homocysteine + H(+). Its function is as follows. Specifically methylates guanosine-37 in various tRNAs. The chain is tRNA (guanine-N(1)-)-methyltransferase from Desulforamulus reducens (strain ATCC BAA-1160 / DSM 100696 / MI-1) (Desulfotomaculum reducens).